The chain runs to 1085 residues: DNA mismatch repair protein MutS (1085 aa).

The tract at residues 533-564 (DEDLFGEEEQNAPPVGSSNHAVGTQPSADDEA) is disordered. Residues 548 to 559 (GSSNHAVGTQPS) show a composition bias toward polar residues. 812–819 (GPNMSGKS) contacts ATP. Residues 997 to 1042 (ERRAPRSAPPTVPARGDDRRSAGRASSSGAGAARGEQGRTLPDGQL) are disordered. Over residues 1019–1031 (GRASSSGAGAARG) the composition is skewed to low complexity.

The protein belongs to the DNA mismatch repair MutS family.

In terms of biological role, this protein is involved in the repair of mismatches in DNA. It is possible that it carries out the mismatch recognition step. This protein has a weak ATPase activity. The protein is DNA mismatch repair protein MutS of Roseiflexus sp. (strain RS-1).